A 188-amino-acid polypeptide reads, in one-letter code: Peptidyl-tRNA hydrolase (188 aa).

Y18 contacts tRNA. H23 serves as the catalytic Proton acceptor. 3 residues coordinate tRNA: Y67, N69, and N115.

This sequence belongs to the PTH family. As to quaternary structure, monomer.

It is found in the cytoplasm. The enzyme catalyses an N-acyl-L-alpha-aminoacyl-tRNA + H2O = an N-acyl-L-amino acid + a tRNA + H(+). Its function is as follows. Hydrolyzes ribosome-free peptidyl-tRNAs (with 1 or more amino acids incorporated), which drop off the ribosome during protein synthesis, or as a result of ribosome stalling. Catalyzes the release of premature peptidyl moieties from peptidyl-tRNA molecules trapped in stalled 50S ribosomal subunits, and thus maintains levels of free tRNAs and 50S ribosomes. In Salinibacter ruber (strain DSM 13855 / M31), this protein is Peptidyl-tRNA hydrolase.